Here is a 267-residue protein sequence, read N- to C-terminus: Small ribosomal subunit protein uS2 (267 aa).

Positions 234 to 267 (DNAEEELAEAISQEEPSAAEELPDDMADNENEFE) are disordered. Positions 250–267 (SAAEELPDDMADNENEFE) are enriched in acidic residues.

Belongs to the universal ribosomal protein uS2 family.

This Dichelobacter nodosus (strain VCS1703A) protein is Small ribosomal subunit protein uS2.